The primary structure comprises 319 residues: Ribosomal RNA small subunit methyltransferase H (319 aa).

S-adenosyl-L-methionine is bound by residues 37–39 (GGY), aspartate 57, phenylalanine 96, aspartate 105, and glutamine 112. Residues 292–302 (RPDEREKERNP) are compositionally biased toward basic and acidic residues. A disordered region spans residues 292-319 (RPDEREKERNPRSRSARLRAVEKQGVPA).

This sequence belongs to the methyltransferase superfamily. RsmH family.

The protein resides in the cytoplasm. It catalyses the reaction cytidine(1402) in 16S rRNA + S-adenosyl-L-methionine = N(4)-methylcytidine(1402) in 16S rRNA + S-adenosyl-L-homocysteine + H(+). In terms of biological role, specifically methylates the N4 position of cytidine in position 1402 (C1402) of 16S rRNA. The sequence is that of Ribosomal RNA small subunit methyltransferase H from Syntrophobacter fumaroxidans (strain DSM 10017 / MPOB).